We begin with the raw amino-acid sequence, 172 residues long: 3-hydroxydecanoyl-[acyl-carrier-protein] dehydratase (172 aa).

His71 is an active-site residue.

The protein belongs to the thioester dehydratase family. FabA subfamily. Homodimer.

It localises to the cytoplasm. The catalysed reaction is a (3R)-hydroxyacyl-[ACP] = a (2E)-enoyl-[ACP] + H2O. The enzyme catalyses (3R)-hydroxydecanoyl-[ACP] = (2E)-decenoyl-[ACP] + H2O. It catalyses the reaction (2E)-decenoyl-[ACP] = (3Z)-decenoyl-[ACP]. Its pathway is lipid metabolism; fatty acid biosynthesis. Its function is as follows. Necessary for the introduction of cis unsaturation into fatty acids. Catalyzes the dehydration of (3R)-3-hydroxydecanoyl-ACP to E-(2)-decenoyl-ACP and then its isomerization to Z-(3)-decenoyl-ACP. Can catalyze the dehydratase reaction for beta-hydroxyacyl-ACPs with saturated chain lengths up to 16:0, being most active on intermediate chain length. The protein is 3-hydroxydecanoyl-[acyl-carrier-protein] dehydratase of Salmonella arizonae (strain ATCC BAA-731 / CDC346-86 / RSK2980).